We begin with the raw amino-acid sequence, 161 residues long: Putative 2'-deoxynucleoside 5'-phosphate N-hydrolase 1 (161 aa).

Substrate-binding positions include 27–33, Y42, H60, E106, and 128–130; these read FLSGSIR and SSM.

It belongs to the 2'-deoxynucleoside 5'-phosphate N-hydrolase 1 family. As to quaternary structure, monomer and homodimer.

It carries out the reaction a pyrimidine 2'-deoxyribonucleoside 5'-phosphate + H2O = a pyrimidine nucleobase + 2-deoxy-D-ribose 5-phosphate. It catalyses the reaction a purine 2'-deoxyribonucleoside 5'-phosphate + H2O = a purine nucleobase + 2-deoxy-D-ribose 5-phosphate. Functionally, catalyzes the cleavage of the N-glycosidic bond of deoxyribonucleoside 5'-monophosphates to yield deoxyribose 5-phosphate and a purine or pyrimidine base. This chain is Putative 2'-deoxynucleoside 5'-phosphate N-hydrolase 1, found in Methanosarcina mazei (strain ATCC BAA-159 / DSM 3647 / Goe1 / Go1 / JCM 11833 / OCM 88) (Methanosarcina frisia).